Consider the following 437-residue polypeptide: Elongator complex protein 4 (437 aa).

Residues 179–247 (FSKSSSPTTP…TKTGSQDSPL (69 aa)) form a disordered region. Residues 181 to 192 (KSSSPTTPSLEQ) are compositionally biased toward polar residues. A Phosphoserine modification is found at S183. The span at 220-237 (SANNNNNNNNNSSSVTSS) shows a compositional bias: low complexity. Residue S242 is modified to Phosphoserine.

Belongs to the ELP4 family. Component of the elongator complex composed of Elp1, Elp2, Elp3, Elp4, Elp5 and Elp6. The elongator complex associates with and stabilizes microtubules; efficient interaction requires the full complex.

Its subcellular location is the cytoplasm. It localises to the nucleus. The protein resides in the cytoskeleton. It is found in the spindle. The protein operates within tRNA modification; 5-methoxycarbonylmethyl-2-thiouridine-tRNA biosynthesis. Functionally, component of the elongator complex, which is required for multiple tRNA modifications, including mcm5U (5-methoxycarbonylmethyl uridine), mcm5s2U (5-methoxycarbonylmethyl-2-thiouridine), and ncm5U (5-carbamoylmethyl uridine). The elongator complex catalyzes the formation of carboxymethyluridine in the wobble base at position 34 in tRNAs. Binding by the elongator complex stabilizes microtubules and promotes their growth. This induces central spindle asymmetry, promoting polarized signaling endosome trafficking during asymmetric cell division and cell fate assignation of sensory organ precursor cells. This Drosophila melanogaster (Fruit fly) protein is Elongator complex protein 4.